The primary structure comprises 291 residues: 5-hydroxytryptamine receptor 1D (291 aa).

A helical transmembrane segment spans residues Leu-30–Leu-54. Residues Cys-31 and Cys-108 are joined by a disulfide bond. Residues Asp-38 and Cys-42 each coordinate serotonin. The DRY motif; important for ligand-induced conformation changes motif lies at Asp-55–Tyr-57. A helical transmembrane segment spans residues Ala-75 to Trp-96. An N-linked (GlcNAc...) asparagine glycan is attached at Asn-111. 3 consecutive transmembrane segments (helical) span residues Ile-115 to Gly-138, Lys-221 to Ile-246, and Ala-256 to Phe-279. Residue Ser-241 participates in serotonin binding. The NPxxY motif; important for ligand-induced conformation changes and signaling signature appears at Asn-272–Tyr-276.

Belongs to the G-protein coupled receptor 1 family. As to quaternary structure, homodimer. Heterodimer with HTR1B.

The protein resides in the cell membrane. Functionally, G-protein coupled receptor for 5-hydroxytryptamine (serotonin). Also functions as a receptor for ergot alkaloid derivatives, various anxiolytic and antidepressant drugs and other psychoactive substances. Ligand binding causes a conformation change that triggers signaling via guanine nucleotide-binding proteins (G proteins) and modulates the activity of downstream effectors, such as adenylate cyclase. HTR1D is coupled to G(i)/G(o) G alpha proteins and mediates inhibitory neurotransmission by inhibiting adenylate cyclase activity. Regulates the release of 5-hydroxytryptamine in the brain, and thereby affects neural activity. May also play a role in regulating the release of other neurotransmitters. May play a role in vasoconstriction. The chain is 5-hydroxytryptamine receptor 1D (HTR1D) from Sus scrofa (Pig).